Here is a 371-residue protein sequence, read N- to C-terminus: Queuine tRNA-ribosyltransferase (371 aa).

Catalysis depends on Asp90, which acts as the Proton acceptor. Substrate is bound by residues 90 to 94 (DSGGF), Asp144, Gln189, and Gly215. The segment at 246–252 (GVGTPEN) is RNA binding. Catalysis depends on Asp265, which acts as the Nucleophile. The RNA binding; important for wobble base 34 recognition stretch occupies residues 270–274 (TRNAR). The Zn(2+) site is built by Cys303, Cys305, Cys308, and His334.

This sequence belongs to the queuine tRNA-ribosyltransferase family. Homodimer. Within each dimer, one monomer is responsible for RNA recognition and catalysis, while the other monomer binds to the replacement base PreQ1. Requires Zn(2+) as cofactor.

The catalysed reaction is 7-aminomethyl-7-carbaguanine + guanosine(34) in tRNA = 7-aminomethyl-7-carbaguanosine(34) in tRNA + guanine. Its pathway is tRNA modification; tRNA-queuosine biosynthesis. In terms of biological role, catalyzes the base-exchange of a guanine (G) residue with the queuine precursor 7-aminomethyl-7-deazaguanine (PreQ1) at position 34 (anticodon wobble position) in tRNAs with GU(N) anticodons (tRNA-Asp, -Asn, -His and -Tyr). Catalysis occurs through a double-displacement mechanism. The nucleophile active site attacks the C1' of nucleotide 34 to detach the guanine base from the RNA, forming a covalent enzyme-RNA intermediate. The proton acceptor active site deprotonates the incoming PreQ1, allowing a nucleophilic attack on the C1' of the ribose to form the product. After dissociation, two additional enzymatic reactions on the tRNA convert PreQ1 to queuine (Q), resulting in the hypermodified nucleoside queuosine (7-(((4,5-cis-dihydroxy-2-cyclopenten-1-yl)amino)methyl)-7-deazaguanosine). This Helicobacter pylori (strain G27) protein is Queuine tRNA-ribosyltransferase.